The following is a 450-amino-acid chain: Probable glucan endo-1,3-beta-glucosidase eglC (450 aa).

An N-terminal signal peptide occupies residues 1-18 (MQFTHLVALALALATSEA). Glu128 acts as the Proton donor in catalysis. Residue Asn183 is glycosylated (N-linked (GlcNAc...) asparagine). Glu239 functions as the Nucleophile in the catalytic mechanism. 2 N-linked (GlcNAc...) asparagine glycosylation sites follow: Asn362 and Asn368. Low complexity-rich tracts occupy residues 377 to 395 (SSAI…SGSS) and 405 to 420 (ASGQ…SAPS). Residues 377 to 420 (SSAISGSSSGSAAGSSGSSGSSGSGASGASGQSSSSTGSSSAPS) are disordered. The GPI-anchor amidated asparagine moiety is linked to residue Asn427. The propeptide at 428 to 450 (AASGLSGSICGAVVAVCLALAAL) is removed in mature form.

The protein belongs to the glycosyl hydrolase 17 family. In terms of processing, the GPI-anchor is attached to the protein in the endoplasmic reticulum and serves to target the protein to the cell surface. There, the glucosamine-inositol phospholipid moiety is cleaved off and the GPI-modified mannoprotein is covalently attached via its lipidless GPI glycan remnant to the 1,6-beta-glucan of the outer cell wall layer.

The protein localises to the cell membrane. The protein resides in the secreted. Its subcellular location is the cell wall. It catalyses the reaction Hydrolysis of (1-&gt;3)-beta-D-glucosidic linkages in (1-&gt;3)-beta-D-glucans.. In terms of biological role, glucanases play a role in cell expansion during growth, in cell-cell fusion during mating, and in spore release during sporulation. This enzyme may be involved in beta-glucan degradation and also function biosynthetically as a transglycosylase. This chain is Probable glucan endo-1,3-beta-glucosidase eglC (eglC), found in Aspergillus fumigatus (strain CBS 144.89 / FGSC A1163 / CEA10) (Neosartorya fumigata).